A 380-amino-acid chain; its full sequence is Glucose-1-phosphate adenylyltransferase (380 aa).

Alpha-D-glucose 1-phosphate-binding positions include Gly-164, 179–180 (EK), and Ser-190.

This sequence belongs to the bacterial/plant glucose-1-phosphate adenylyltransferase family. As to quaternary structure, homotetramer.

The enzyme catalyses alpha-D-glucose 1-phosphate + ATP + H(+) = ADP-alpha-D-glucose + diphosphate. The protein operates within glycan biosynthesis; glycogen biosynthesis. Its function is as follows. Involved in the biosynthesis of ADP-glucose, a building block required for the elongation reactions to produce glycogen. Catalyzes the reaction between ATP and alpha-D-glucose 1-phosphate (G1P) to produce pyrophosphate and ADP-Glc. This is Glucose-1-phosphate adenylyltransferase from Streptococcus pneumoniae (strain 70585).